The chain runs to 88 residues: UPF0298 protein BA_4142/GBAA_4142/BAS3844 (88 aa).

Belongs to the UPF0298 family.

It localises to the cytoplasm. This Bacillus anthracis protein is UPF0298 protein BA_4142/GBAA_4142/BAS3844.